The sequence spans 190 residues: dTTP/UTP pyrophosphatase (190 aa).

Catalysis depends on Asp-70, which acts as the Proton acceptor.

Belongs to the Maf family. YhdE subfamily. The cofactor is a divalent metal cation.

The protein localises to the cytoplasm. The enzyme catalyses dTTP + H2O = dTMP + diphosphate + H(+). It carries out the reaction UTP + H2O = UMP + diphosphate + H(+). Functionally, nucleoside triphosphate pyrophosphatase that hydrolyzes dTTP and UTP. May have a dual role in cell division arrest and in preventing the incorporation of modified nucleotides into cellular nucleic acids. The protein is dTTP/UTP pyrophosphatase of Paramagnetospirillum magneticum (strain ATCC 700264 / AMB-1) (Magnetospirillum magneticum).